A 558-amino-acid chain; its full sequence is 2-hydroxy-7-methoxy-5-methyl-1-naphthoate--CoA ligase (558 aa).

ATP contacts are provided by residues 212–213 (GG), 329–331 (ASR), valine 351, aspartate 435, arginine 450, and lysine 542.

The protein belongs to the ATP-dependent AMP-binding enzyme family.

The enzyme catalyses 2-hydroxy-7-methoxy-5-methyl-1-naphthoate + ATP + CoA = 2-hydroxy-7-methoxy-5-methyl-1-naphthoyl-CoA + AMP + diphosphate. It functions in the pathway antibiotic biosynthesis. Its function is as follows. Catalyzes the activation of 2-hydroxy-7-methoxy-5-methyl-1-naphthoate in the biosynthesis of the naphthoate moiety of the neocarzinostatin chromophore. Also catalyzes the activation of other 1-naphthoic acid analogs such as 2-hydroxy-5-methyl-1-naphthoate or 2,7-dihydroxy-5-methyl-1-naphthoate in vitro. The sequence is that of 2-hydroxy-7-methoxy-5-methyl-1-naphthoate--CoA ligase from Streptomyces carzinostaticus.